We begin with the raw amino-acid sequence, 460 residues long: Sorting nexin-4 (460 aa).

Positions 1–16 (MTATEQQQDDFSNVSW) are enriched in polar residues. Positions 1-53 (MTATEQQQDDFSNVSWSEHVHDQQTRSVPDAEEPGHDMNAPGTGLERDAPSLG) are disordered. The 123-residue stretch at 56-178 (KLECTVDTPI…TFLESPDWNA (123 aa)) folds into the PX domain. Coiled-coil stretches lie at residues 238-266 (EKVI…QKLI), 306-337 (RDMQ…EYLN), and 374-403 (QARR…TSDM).

It belongs to the sorting nexin family. Forms a complex with ATG20 and ATG17.

Its subcellular location is the cytoplasm. The protein resides in the membrane. It localises to the endosome membrane. Sorting nexin involved in the separation or division of vacuoles throughout the entire life cycle of the cells. Involved in retrieval of late-Golgi SNAREs from post-Golgi endosomes to the trans-Golgi network, for cytoplasm to vacuole transport (Cvt), and autophagy of large cargos including mitophagy, pexophagy and glycophagy. Autophagy is required for proper vegetative growth, asexual/sexual reproduction, and full virulence. Autophagy is particularly involved in the biosynthesis of deoxynivalenol (DON), an important virulence determinant. In Gibberella zeae (strain ATCC MYA-4620 / CBS 123657 / FGSC 9075 / NRRL 31084 / PH-1) (Wheat head blight fungus), this protein is Sorting nexin-4.